The following is a 158-amino-acid chain: Peptide deformylase (158 aa).

The Fe cation site is built by C88 and H130. E131 is an active-site residue. Residue H134 coordinates Fe cation.

This sequence belongs to the polypeptide deformylase family. Requires Fe(2+) as cofactor.

It carries out the reaction N-terminal N-formyl-L-methionyl-[peptide] + H2O = N-terminal L-methionyl-[peptide] + formate. Its function is as follows. Removes the formyl group from the N-terminal Met of newly synthesized proteins. Requires at least a dipeptide for an efficient rate of reaction. N-terminal L-methionine is a prerequisite for activity but the enzyme has broad specificity at other positions. The chain is Peptide deformylase from Agathobacter rectalis (strain ATCC 33656 / DSM 3377 / JCM 17463 / KCTC 5835 / VPI 0990) (Eubacterium rectale).